The primary structure comprises 228 residues: Cytochrome b6-f complex iron-sulfur subunit 1, chloroplastic (228 aa).

A chloroplast-targeting transit peptide spans 1-49 (MASSTLSPVTQLCSSKSGLSSVSQCLLVKPMKINSHGLGKDKRMKVKCM). The chain crosses the membrane as a helical span at residues 72-92 (LLGALSLPTAGMLVPYGTFFV). A Rieske domain is found at 115–211 (ASEWLKTHPP…ADIDDGKVVF (97 aa)). Residues Cys-157, His-159, Cys-175, and His-178 each coordinate [2Fe-2S] cluster. A disulfide bond links Cys-162 and Cys-177.

The protein belongs to the Rieske iron-sulfur protein family. In terms of assembly, the 4 large subunits of the cytochrome b6-f complex are cytochrome b6, subunit IV (17 kDa polypeptide, petD), cytochrome f and the Rieske protein, while the 4 small subunits are petG, petL, petM and petN. The complex functions as a dimer. The cofactor is [2Fe-2S] cluster.

It is found in the plastid. It localises to the chloroplast thylakoid membrane. The enzyme catalyses 2 oxidized [plastocyanin] + a plastoquinol + 2 H(+)(in) = 2 reduced [plastocyanin] + a plastoquinone + 4 H(+)(out). Component of the cytochrome b6-f complex, which mediates electron transfer between photosystem II (PSII) and photosystem I (PSI), cyclic electron flow around PSI, and state transitions. This Nicotiana tabacum (Common tobacco) protein is Cytochrome b6-f complex iron-sulfur subunit 1, chloroplastic (petC1).